Reading from the N-terminus, the 143-residue chain is Glutaredoxin-2 (143 aa).

A mitochondrion-targeting transit peptide spans 1–30 (METNFSFDSNLIVIIIITLFATRIIAKRFL). The residue at position 37 (Ser37) is a Phosphoserine. The region spanning 41–143 (VAHVKDLIGQ…LAEILKPVFQ (103 aa)) is the Glutaredoxin domain. Glutathione is bound at residue 58–63 (KTYCPY). Residue Cys61 is modified to S-glutathionyl cysteine; alternate. Cysteines 61 and 64 form a disulfide. Ser91 carries the post-translational modification Phosphoserine. Residues Val109 and 122–123 (NS) each bind glutathione.

This sequence belongs to the glutaredoxin family.

The protein localises to the cytoplasm. The protein resides in the mitochondrion. The enzyme catalyses 2 glutathione + H2O2 = glutathione disulfide + 2 H2O. It catalyses the reaction 1-chloro-2,4-dinitrobenzene + glutathione = 2,4-dinitrophenyl-S-glutathione + chloride + H(+). The catalysed reaction is RX + glutathione = an S-substituted glutathione + a halide anion + H(+). Functionally, component of the glutathione system which performs several activities such as glutathione-dependent oxidoreductase, glutathione peroxidase and glutathione S-transferase (GST) activity. The disulfide bond functions as an electron carrier in the glutathione-dependent synthesis of deoxyribonucleotides by the enzyme ribonucleotide reductase. In addition, it is also involved in reducing cytosolic protein- and non-protein-disulfides in a coupled system with glutathione reductase. Required for resistance to reactive oxygen species (ROS) by directly reducing hydroperoxides and for the detoxification of ROS-mediated damage. GRX2 is more active as an oxidoreductase than GRX1. Responsible for the S-glutathionylation of DHBP synthase. This chain is Glutaredoxin-2 (GRX2), found in Saccharomyces cerevisiae (strain ATCC 204508 / S288c) (Baker's yeast).